We begin with the raw amino-acid sequence, 96 residues long: Integration host factor subunit beta (96 aa).

This sequence belongs to the bacterial histone-like protein family. Heterodimer of an alpha and a beta chain.

This protein is one of the two subunits of integration host factor, a specific DNA-binding protein that functions in genetic recombination as well as in transcriptional and translational control. The protein is Integration host factor subunit beta of Methylocella silvestris (strain DSM 15510 / CIP 108128 / LMG 27833 / NCIMB 13906 / BL2).